A 650-amino-acid polypeptide reads, in one-letter code: Chaperone protein DnaK (650 aa).

Thr-200 is modified (phosphothreonine; by autocatalysis). Positions 614-634 are disordered; that stretch reads AGAAGAAGAAEGAAHAGGAQQ.

It belongs to the heat shock protein 70 family.

Functionally, acts as a chaperone. The protein is Chaperone protein DnaK of Burkholderia cenocepacia (strain ATCC BAA-245 / DSM 16553 / LMG 16656 / NCTC 13227 / J2315 / CF5610) (Burkholderia cepacia (strain J2315)).